The sequence spans 329 residues: N-acetyl-gamma-glutamyl-phosphate reductase (329 aa).

Residue cysteine 155 is part of the active site.

The protein belongs to the NAGSA dehydrogenase family. Type 1 subfamily.

The protein resides in the cytoplasm. The catalysed reaction is N-acetyl-L-glutamate 5-semialdehyde + phosphate + NADP(+) = N-acetyl-L-glutamyl 5-phosphate + NADPH + H(+). It functions in the pathway amino-acid biosynthesis; L-arginine biosynthesis; N(2)-acetyl-L-ornithine from L-glutamate: step 3/4. Its function is as follows. Catalyzes the NADPH-dependent reduction of N-acetyl-5-glutamyl phosphate to yield N-acetyl-L-glutamate 5-semialdehyde. In Shewanella piezotolerans (strain WP3 / JCM 13877), this protein is N-acetyl-gamma-glutamyl-phosphate reductase.